Here is a 397-residue protein sequence, read N- to C-terminus: Polygalacturonase (397 aa).

An N-terminal signal peptide occupies residues 1–22; sequence MGSYLGIYTILVLCLLGYSANA. 4 PbH1 repeats span residues 169-195, 196-217, 219-239, and 249-270; these read GKNM…HLGR, CEGV…SVGD, MKNL…SVGS, and VTDI…RIKT. N-linked (GlcNAc...) asparagine glycosylation occurs at Asn-171. The active-site Proton donor is Asp-210. Cys-212 and Cys-229 are joined by a disulfide. The active site involves His-233. An N-linked (GlcNAc...) asparagine glycan is attached at Asn-256. 2 disulfides stabilise this stretch: Cys-341–Cys-347 and Cys-370–Cys-386.

The protein belongs to the glycosyl hydrolase 28 family. Pollen.

It localises to the secreted. It is found in the cell wall. It carries out the reaction (1,4-alpha-D-galacturonosyl)n+m + H2O = (1,4-alpha-D-galacturonosyl)n + (1,4-alpha-D-galacturonosyl)m.. In terms of biological role, may function in depolymerizing pectin during pollen development, germination, and tube growth. This is Polygalacturonase from Brassica napus (Rape).